A 152-amino-acid chain; its full sequence is UPF0178 protein SaurJH9_0705 (152 aa).

It belongs to the UPF0178 family.

This chain is UPF0178 protein SaurJH9_0705, found in Staphylococcus aureus (strain JH9).